Here is a 316-residue protein sequence, read N- to C-terminus: Olfactory receptor 8J1 (316 aa).

The Extracellular portion of the chain corresponds to 1 to 25 (MAPENFTRVTEFILTGVSSCPELQI). An N-linked (GlcNAc...) asparagine glycan is attached at Asn5. A helical membrane pass occupies residues 26–46 (PLFLVFLVLYGLTMAGNLGII). Topologically, residues 47 to 54 (TLTSVDSR) are cytoplasmic. A helical membrane pass occupies residues 55 to 75 (LQTPMYFFLQHLALINLGNST). Topologically, residues 76–99 (VIAPKMLINFLVKKKTTSFYECAT) are extracellular. Cys97 and Cys189 are disulfide-bonded. Residues 100-120 (QLGGFLFFIVSEVIMLALMAY) traverse the membrane as a helical segment. At 121-139 (DRYVAICNPLLYMVVVSRR) the chain is on the cytoplasmic side. The chain crosses the membrane as a helical span at residues 140-160 (LCLLLVSLTYLYGFSTAIVVS). Topologically, residues 161–197 (SYVFSVSYCSSNIINHFYCDNVPLLALSCSDTYLPET) are extracellular. Residues 198–217 (VVFISAATNVVGSLIIVLVS) form a helical membrane-spanning segment. The Cytoplasmic segment spans residues 218–237 (YFNIVLSILKICSSEGRKKA). The chain crosses the membrane as a helical span at residues 238–258 (FSTCASHMMAVTIFYGTLLFM). Topologically, residues 259–272 (YVQPRSNHSLDTDD) are extracellular. A helical membrane pass occupies residues 273 to 293 (KMASVFYTLVIPMLNPLIYSL). Over 294-316 (RNKDVKTALQRFMTNLCYSFKTM) the chain is Cytoplasmic.

The protein belongs to the G-protein coupled receptor 1 family.

Its subcellular location is the cell membrane. Functionally, odorant receptor. This Homo sapiens (Human) protein is Olfactory receptor 8J1 (OR8J1).